A 274-amino-acid chain; its full sequence is Purine nucleoside phosphorylase 1 (274 aa).

Phosphate-binding positions include Ser-29, His-60, 80 to 82, and Ala-112; that span reads RFH. A Phosphoserine modification is found at Ser-29. Glu-192 contacts a purine D-ribonucleoside. Phosphate is bound at residue Ser-211. Asn-234 serves as a coordination point for a purine D-ribonucleoside.

It belongs to the PNP/MTAP phosphorylase family. As to quaternary structure, homotrimer.

The enzyme catalyses a purine D-ribonucleoside + phosphate = a purine nucleobase + alpha-D-ribose 1-phosphate. The catalysed reaction is a purine 2'-deoxy-D-ribonucleoside + phosphate = a purine nucleobase + 2-deoxy-alpha-D-ribose 1-phosphate. It participates in purine metabolism; purine nucleoside salvage. Functionally, the purine nucleoside phosphorylases catalyze the phosphorolytic breakdown of the N-glycosidic bond in the beta-(deoxy)ribonucleoside molecules, with the formation of the corresponding free purine bases and pentose-1-phosphate. Cleaves guanosine, inosine, 2'-deoxyguanosine and 2'-deoxyinosine. The protein is Purine nucleoside phosphorylase 1 (punA) of Geobacillus stearothermophilus (Bacillus stearothermophilus).